Consider the following 541-residue polypeptide: Neutral amino acid transporter B(0) (541 aa).

N-acetylmethionine is present on methionine 1. Positions 1-10 (MVADPPKGDP) are enriched in basic and acidic residues. Positions 1–32 (MVADPPKGDPKGLAAVEPTANGAPAQDPLEDS) are disordered. The Cytoplasmic segment spans residues 1–52 (MVADPPKGDPKGLAAVEPTANGAPAQDPLEDSGAAVGRCCSSRDQVRRCLRA). The helical transmembrane segment at 53–82 (NLLVLLTVVAVVAGVALGLAVSGAGGALAL) threads the bilayer. Topologically, residues 83 to 95 (GPARLIAFAFPGE) are extracellular. Residues 96 to 117 (LLLRLLKMIILPLVVCSLVGGA) traverse the membrane as a helical segment. The Cytoplasmic segment spans residues 118-131 (ASLDPSALGRLGAW). The helical transmembrane segment at 132-154 (ALLFFLVTTLLASALGVGLALAL) threads the bilayer. Residues 155-225 (QPGAAFAAMN…GTLVKVPVAH (71 aa)) lie on the Extracellular side of the membrane. N-linked (GlcNAc...) asparagine glycans are attached at residues asparagine 164 and asparagine 215. A helical transmembrane segment spans residues 226–249 (EEEGMNILGLVVFAIVFGVALRKL). Topologically, residues 250–258 (GPEGEPLIR) are cytoplasmic. The helical transmembrane segment at 259–286 (FFNSFNDATMVLVSWIMWYAPVGILFLV) threads the bilayer. Residues 287–307 (ASKIVEMDDVGVLFASLGKYI) are Extracellular-facing. The chain crosses the membrane as a helical span at residues 308 to 329 (LCCLLGHAIHGLLVLPLIYFLF). The Cytoplasmic portion of the chain corresponds to 330-334 (TRKNP). The discontinuously helical intramembrane region spans 335–365 (YRFLWGILTPLAMAFGTSSSSATLPLMMKCV). Topologically, residues 366–374 (EERNGVAKH) are cytoplasmic. The helical transmembrane segment at 375 to 401 (ISRFVLPIGATVNMDGAALFQCVAAVF) threads the bilayer. Residues glycine 383, threonine 385, and asparagine 387 each contribute to the Na(+) site. Residues 402 to 414 (IAQLNRQSLDFVK) are Extracellular-facing. Residues 415–448 (IITILVTATASSVGAAGIPAGGVLTLAIILEAVS) constitute an intramembrane region (discontinuously helical). Residues 449-461 (LPVSEISLILAVD) are Extracellular-facing. The chain crosses the membrane as a helical span at residues 462–483 (WLVDRSCTIINVEGDAFGAGLL). Asparagine 472 and aspartate 476 together coordinate Na(+). The Cytoplasmic segment spans residues 484–541 (QHYVDRTEQRGSEPELTQVKSEVPLGSLPAPNEEGNPLLRHSPGAAGDAGACEKESVM). The disordered stretch occupies residues 493-541 (RGSEPELTQVKSEVPLGSLPAPNEEGNPLLRHSPGAAGDAGACEKESVM). Serine 495, serine 504, and serine 539 each carry phosphoserine.

The protein belongs to the dicarboxylate/amino acid:cation symporter (DAACS) (TC 2.A.23) family. SLC1A5 subfamily. In terms of assembly, homotrimer.

It localises to the cell membrane. The protein resides in the melanosome. It catalyses the reaction L-glutamine(out) + L-serine(in) + Na(+)(out) = L-glutamine(in) + L-serine(out) + Na(+)(in). The catalysed reaction is L-glutamine(in) + L-serine(out) + Na(+)(out) = L-glutamine(out) + L-serine(in) + Na(+)(in). The enzyme catalyses L-threonine(in) + L-glutamine(out) + Na(+)(out) = L-threonine(out) + L-glutamine(in) + Na(+)(in). It carries out the reaction L-threonine(out) + L-glutamine(in) + Na(+)(out) = L-threonine(in) + L-glutamine(out) + Na(+)(in). It catalyses the reaction L-asparagine(in) + L-glutamine(out) + Na(+)(out) = L-asparagine(out) + L-glutamine(in) + Na(+)(in). The catalysed reaction is L-asparagine(out) + L-glutamine(in) + Na(+)(out) = L-asparagine(in) + L-glutamine(out) + Na(+)(in). The enzyme catalyses L-glutamine(in) + L-alanine(out) + Na(+)(out) = L-glutamine(out) + L-alanine(in) + Na(+)(in). It carries out the reaction L-valine(out) + L-glutamine(in) + Na(+)(out) = L-valine(in) + L-glutamine(out) + Na(+)(in). It catalyses the reaction L-glutamine(in) + L-methionine(out) + Na(+)(out) = L-glutamine(out) + L-methionine(in) + Na(+)(in). The catalysed reaction is L-glutamine(in) + L-glutamate(out) + Na(+)(out) + H(+)(out) = L-glutamine(out) + L-glutamate(in) + Na(+)(in) + H(+)(in). The enzyme catalyses D-serine(in) + L-glutamine(out) + Na(+)(out) = D-serine(out) + L-glutamine(in) + Na(+)(in). It carries out the reaction D-serine(in) + L-alanine(out) + Na(+)(out) = D-serine(out) + L-alanine(in) + Na(+)(in). It catalyses the reaction nitrate(in) = nitrate(out). The catalysed reaction is iodide(out) = iodide(in). The enzyme catalyses thiocyanate(in) = thiocyanate(out). Its function is as follows. Sodium-coupled antiporter of neutral amino acids. In a tri-substrate transport cycle, exchanges neutral amino acids between the extracellular and intracellular compartments, coupled to the inward cotransport of at least one sodium ion. The preferred substrate is the essential amino acid L-glutamine, a precursor for biosynthesis of proteins, nucleotides and amine sugars as well as an alternative fuel for mitochondrial oxidative phosphorylation. Exchanges L-glutamine with other neutral amino acids such as L-serine, L-threonine and L-asparagine in a bidirectional way. Provides L-glutamine to proliferating stem and activated cells driving the metabolic switch toward cell differentiation. The transport cycle is usually pH-independent, with the exception of L-glutamate. Transports extracellular L-glutamate coupled to the cotransport of one proton and one sodium ion in exchange for intracellular L-glutamine counter-ion. May provide for L-glutamate uptake in glial cells regulating glutamine/glutamate cycle in the nervous system. Can transport D-amino acids. Mediates D-serine release from the retinal glia potentially affecting NMDA receptor function in retinal neurons. Displays sodium- and amino acid-dependent but uncoupled channel-like anion conductance with a preference SCN(-) &gt;&gt; NO3(-) &gt; I(-) &gt; Cl(-). Through binding of the fusogenic protein syncytin-1/ERVW-1 may mediate trophoblasts syncytialization, the spontaneous fusion of their plasma membranes, an essential process in placental development. This Oryctolagus cuniculus (Rabbit) protein is Neutral amino acid transporter B(0) (SLC1A5).